Consider the following 508-residue polypeptide: Glycerol kinase (508 aa).

Residue Thr14 participates in ADP binding. Residues Thr14, Thr15, and Ser16 each coordinate ATP. Thr14 contacts sn-glycerol 3-phosphate. Arg18 contacts ADP. Positions 84, 85, 136, and 245 each coordinate sn-glycerol 3-phosphate. The glycerol site is built by Arg84, Glu85, Tyr136, Asp245, and Gln246. ADP contacts are provided by Thr267 and Gly314. 3 residues coordinate ATP: Thr267, Gly314, and Gln318. An ADP-binding site is contributed by Asn419.

Belongs to the FGGY kinase family.

It carries out the reaction glycerol + ATP = sn-glycerol 3-phosphate + ADP + H(+). The protein operates within polyol metabolism; glycerol degradation via glycerol kinase pathway; sn-glycerol 3-phosphate from glycerol: step 1/1. Its activity is regulated as follows. Inhibited by fructose 1,6-bisphosphate (FBP). In terms of biological role, key enzyme in the regulation of glycerol uptake and metabolism. Catalyzes the phosphorylation of glycerol to yield sn-glycerol 3-phosphate. This Bordetella pertussis (strain Tohama I / ATCC BAA-589 / NCTC 13251) protein is Glycerol kinase.